Here is a 56-residue protein sequence, read N- to C-terminus: Large ribosomal subunit protein bL32 (56 aa).

The segment at 1-21 is disordered; it reads MAVQKNKPTRSKRGMRRSHDA. Residues 7–16 show a composition bias toward basic residues; it reads KPTRSKRGMR.

The protein belongs to the bacterial ribosomal protein bL32 family.

This chain is Large ribosomal subunit protein bL32, found in Hamiltonella defensa subsp. Acyrthosiphon pisum (strain 5AT).